Consider the following 116-residue polypeptide: Methionine-R-sulfoxide reductase B1 (116 aa).

Residues 1 to 106 (MSFCSFFGGE…FSSSLKFIPK (106 aa)) form the MsrB domain. Positions 23, 26, 71, and 74 each coordinate Zn(2+). Sec95 (nucleophile) is an active-site residue. A non-standard amino acid (selenocysteine) is located at residue Sec95.

Belongs to the MsrB Met sulfoxide reductase family. Zn(2+) is required as a cofactor. Truncated MSRB1/SEPX1 proteins produced by failed UGA/Sec decoding are ubiquitinated by the CRL2(FEM1C) E3 ubiquitin-protein ligase complex.

It is found in the cytoplasm. The protein localises to the nucleus. Its subcellular location is the cytoskeleton. It catalyses the reaction L-methionyl-[protein] + [thioredoxin]-disulfide + H2O = L-methionyl-(R)-S-oxide-[protein] + [thioredoxin]-dithiol. It carries out the reaction [thioredoxin]-disulfide + L-methionine + H2O = L-methionine (R)-S-oxide + [thioredoxin]-dithiol. In terms of biological role, methionine-sulfoxide reductase that specifically reduces methionine (R)-sulfoxide back to methionine. While in many cases, methionine oxidation is the result of random oxidation following oxidative stress, methionine oxidation is also a post-translational modification that takes place on specific residue. Acts as a regulator of actin assembly by reducing methionine (R)-sulfoxide mediated by MICALs (MICAL1, MICAL2 or MICAL3) on actin, thereby promoting filament repolymerization. Plays a role in innate immunity by reducing oxidized actin, leading to actin repolymerization in macrophages. The chain is Methionine-R-sulfoxide reductase B1 (Msrb1) from Rattus norvegicus (Rat).